The sequence spans 932 residues: Protocadherin gamma-A8 (932 aa).

Residues 1 to 29 (MAAPQSRPRRGELILLCALLGTLWEIGRG) form the signal peptide. 6 consecutive Cadherin domains span residues 30-133 (QIRY…NPKF), 134-242 (QVED…APVF), 243-347 (PHPI…RPEV), 348-452 (IITS…PPTF), 453-562 (PHAS…APEI), and 570-682 (DGST…KPSV). Residues 30-692 (QIRYSVPEET…DPNDSSLTLY (663 aa)) lie on the Extracellular side of the membrane. Asn-47 is a glycosylation site (N-linked (GlcNAc...) asparagine). 3 N-linked (GlcNAc...) asparagine glycosylation sites follow: Asn-414, Asn-419, and Asn-545. Asn-685 is a glycosylation site (N-linked (GlcNAc...) asparagine). Residues 693–713 (LVVAVAAISCVFLAFVAVLLG) form a helical membrane-spanning segment. The Cytoplasmic segment spans residues 714–932 (LRLRRWHKSR…KKKSGKKEKK (219 aa)). Disordered regions lie at residues 804–841 (ADHGQQAPPNTDWRFSQAQRPGTSGSQNGDDTGTWPNN) and 902–932 (ATLTNAAGKRDGKAPAGGNGNKKKSGKKEKK). Over residues 810–841 (APPNTDWRFSQAQRPGTSGSQNGDDTGTWPNN) the composition is skewed to polar residues. Over residues 922 to 932 (NKKKSGKKEKK) the composition is skewed to basic residues.

It is found in the cell membrane. Potential calcium-dependent cell-adhesion protein. May be involved in the establishment and maintenance of specific neuronal connections in the brain. The polypeptide is Protocadherin gamma-A8 (PCDHGA8) (Homo sapiens (Human)).